Here is a 185-residue protein sequence, read N- to C-terminus: Transcription factor E (185 aa).

Residues 5 to 88 form the HTH TFE/IIEalpha-type domain; that stretch reads KNKELLEIAQ…YWRLETKKLP (84 aa).

The protein belongs to the TFE family. In terms of assembly, monomer. Interaction with RNA polymerase subunits RpoF and RpoE is necessary for Tfe stimulatory transcription activity. Able to interact with Tbp and RNA polymerase in the absence of DNA promoter. Interacts both with the preinitiation and elongation complexes.

Its function is as follows. Transcription factor that plays a role in the activation of archaeal genes transcribed by RNA polymerase. Facilitates transcription initiation by enhancing TATA-box recognition by TATA-box-binding protein (Tbp), and transcription factor B (Tfb) and RNA polymerase recruitment. Not absolutely required for transcription in vitro, but particularly important in cases where Tbp or Tfb function is not optimal. It dynamically alters the nucleic acid-binding properties of RNA polymerases by stabilizing the initiation complex and destabilizing elongation complexes. Seems to translocate with the RNA polymerase following initiation and acts by binding to the non template strand of the transcription bubble in elongation complexes. The chain is Transcription factor E from Thermococcus kodakarensis (strain ATCC BAA-918 / JCM 12380 / KOD1) (Pyrococcus kodakaraensis (strain KOD1)).